A 533-amino-acid chain; its full sequence is MSIQVEHPAGGYKKLFETVEELSSPLTAHVTGRIPLWLTGSLLRCGPGLFEVGSEPFYHLFDGQALLHKFDFKEGHVTYHRRFIRTDAYVRAMTEKRIVITEFGTCAFPDPCKNIFSRFFSYFRGVEVTDNALVNVYPVGEDYYACTETNFITKINPETLETIKQVDLCNYVSVNGATAHPHIENDGTVYNIGNCFGKNFSIAYNIVKIPPLQADKEDPISKSEIVVQFPCSDRFKPSYVHSFGLTPNYIVFVETPVKINLFKFLSSWSLWGANYMDCFESNETMGVWLHIADKKRKKYLNNKYRTSPFNLFHHINTYEDNGFLIVDLCCWKGFEFVYNYLYLANLRENWEEVKKNARKAPQPEVRRYVLPLNIDKADTGKNLITLPNTTATAILCSEETIWLEPEVLFSGPRQAFEFPQINYQKYCGKPYTYAYGLGLNHFVPDRLCKLNVKTKETWVWQEPDSYPSEPIFVSHPDALEEDDGVVLSVVVSPGAGQKPAYLLILNAKDLSEVARAEVEINIPVTFHGLFKKS.

An N-acetylserine modification is found at serine 2. Threonine 101 and threonine 105 each carry phosphothreonine. The S-palmitoyl cysteine; in membrane form moiety is linked to residue cysteine 112. N6-acetyllysine is present on lysine 113. Serine 117 is subject to Phosphoserine. Histidine 180 provides a ligand contact to Fe cation. The S-palmitoyl cysteine; in membrane form moiety is linked to residue cysteine 231. Positions 241 and 313 each coordinate Fe cation. 2 S-palmitoyl cysteine; in membrane form lipidation sites follow: cysteine 329 and cysteine 330. Position 527 (histidine 527) interacts with Fe cation.

The protein belongs to the carotenoid oxygenase family. In terms of assembly, interacts with MYO7A; this mediates light-dependent intracellular transport of RPE65. The cofactor is Fe(2+). Palmitoylation by LRAT regulates ligand binding specificity; the palmitoylated form (membrane form) specifically binds all-trans-retinyl-palmitate, while the soluble unpalmitoylated form binds all-trans-retinol (vitamin A). In terms of tissue distribution, retinal pigment epithelium specific.

The protein resides in the cytoplasm. The protein localises to the cell membrane. It localises to the microsome membrane. It carries out the reaction an all-trans-retinyl ester + H2O = 11-cis-retinol + a fatty acid + H(+). It catalyses the reaction lutein = (3R,3'S)-zeaxanthin. The enzyme catalyses all-trans-retinyl hexadecanoate + H2O = 11-cis-retinol + hexadecanoate + H(+). In terms of biological role, critical isomerohydrolase in the retinoid cycle involved in regeneration of 11-cis-retinal, the chromophore of rod and cone opsins. Catalyzes the cleavage and isomerization of all-trans-retinyl fatty acid esters to 11-cis-retinol which is further oxidized by 11-cis retinol dehydrogenase to 11-cis-retinal for use as visual chromophore. Essential for the production of 11-cis retinal for both rod and cone photoreceptors. Also capable of catalyzing the isomerization of lutein to meso-zeaxanthin an eye-specific carotenoid. The soluble form binds vitamin A (all-trans-retinol), making it available for LRAT processing to all-trans-retinyl ester. The membrane form, palmitoylated by LRAT, binds all-trans-retinyl esters, making them available for IMH (isomerohydrolase) processing to all-cis-retinol. The soluble form is regenerated by transferring its palmitoyl groups onto 11-cis-retinol, a reaction catalyzed by LRAT. The chain is Retinoid isomerohydrolase (RPE65) from Chlorocebus aethiops (Green monkey).